The primary structure comprises 749 residues: uncharacterized protein (749 aa).

Disordered regions lie at residues 1–58, 124–170, 200–291, and 385–405; these read MGTV…QPSN, DANA…PSPL, SRFS…PPVS, and YTWS…NPST. Low complexity predominate over residues 13–24; the sequence is LNNGLSSNNGSS. Composition is skewed to polar residues over residues 149 to 159, 238 to 252, 265 to 275, and 388 to 405; these read KSASKDSNAFN, ESKT…PSLN, LNYQNSSLNPS, and SRHS…NPST. The PSP1 C-terminal domain maps to 644-729; sequence KRILRKAQPH…YKTRIWMCAV (86 aa).

This is an uncharacterized protein from Schizosaccharomyces pombe (strain 972 / ATCC 24843) (Fission yeast).